The following is a 383-amino-acid chain: Acetylornithine deacetylase (383 aa).

Position 80 (histidine 80) interacts with Zn(2+). Aspartate 82 is an active-site residue. Aspartate 112 is a binding site for Zn(2+). The active site involves glutamate 144. Residues glutamate 145, glutamate 169, and histidine 355 each coordinate Zn(2+).

This sequence belongs to the peptidase M20A family. ArgE subfamily. In terms of assembly, homodimer. It depends on Zn(2+) as a cofactor. Co(2+) is required as a cofactor. Requires glutathione as cofactor.

The protein localises to the cytoplasm. The enzyme catalyses N(2)-acetyl-L-ornithine + H2O = L-ornithine + acetate. The protein operates within amino-acid biosynthesis; L-arginine biosynthesis; L-ornithine from N(2)-acetyl-L-ornithine (linear): step 1/1. Its function is as follows. Catalyzes the hydrolysis of the amide bond of N(2)-acetylated L-amino acids. Cleaves the acetyl group from N-acetyl-L-ornithine to form L-ornithine, an intermediate in L-arginine biosynthesis pathway, and a branchpoint in the synthesis of polyamines. This Shigella flexneri serotype 5b (strain 8401) protein is Acetylornithine deacetylase.